The following is a 262-amino-acid chain: 5'-nucleotidase SurE (262 aa).

Residues Asp13, Asp14, Ser44, and Asn97 each coordinate a divalent metal cation.

The protein belongs to the SurE nucleotidase family. A divalent metal cation is required as a cofactor.

Its subcellular location is the cytoplasm. It catalyses the reaction a ribonucleoside 5'-phosphate + H2O = a ribonucleoside + phosphate. Its function is as follows. Nucleotidase that shows phosphatase activity on nucleoside 5'-monophosphates. The sequence is that of 5'-nucleotidase SurE from Myxococcus xanthus (strain DK1622).